The chain runs to 334 residues: Syntaxin-18 (334 aa).

Residues 1–308 (MAVDITLLFR…EDIREAIKNN (308 aa)) lie on the Cytoplasmic side of the membrane. Disordered regions lie at residues 29-50 (GGAD…GDFS) and 166-225 (LSKL…GEDE). 2 stretches are compositionally biased toward basic and acidic residues: residues 33-50 (GSRD…GDFS) and 166-182 (LSKL…DSTS). Over residues 183–192 (EKAPQNASQD) the composition is skewed to polar residues. Over residues 193–207 (SEGKPAAEELPEKPL) the composition is skewed to basic and acidic residues. The t-SNARE coiled-coil homology domain maps to 242–304 (IGEMNSLFDE…KEGNEDIREA (63 aa)). The helical; Anchor for type IV membrane protein transmembrane segment at 309 to 329 (AGFRVWILFFLVMCSFSLLFL) threads the bilayer. At 330 to 334 (DWYDS) the chain is on the lumenal side.

The protein belongs to the syntaxin family. In terms of assembly, component of a SNARE complex consisting of STX18, USE1L, BNIP1/SEC20L, and SEC22B. RINT1/TIP20L and ZW10 are associated with the complex through interaction with BNIP1/SEC20L. Interacts directly with USE1L and BNIP1/SEC20L.

It localises to the endoplasmic reticulum membrane. It is found in the golgi apparatus membrane. In terms of biological role, syntaxin that may be involved in targeting and fusion of Golgi-derived retrograde transport vesicles with the ER. The protein is Syntaxin-18 (Stx18) of Mus musculus (Mouse).